The chain runs to 387 residues: 4-hydroxy-3-methylbut-2-en-1-yl diphosphate synthase (flavodoxin) (387 aa).

Residues cysteine 280, cysteine 283, cysteine 315, and glutamate 322 each coordinate [4Fe-4S] cluster.

This sequence belongs to the IspG family. It depends on [4Fe-4S] cluster as a cofactor.

The catalysed reaction is (2E)-4-hydroxy-3-methylbut-2-enyl diphosphate + oxidized [flavodoxin] + H2O + 2 H(+) = 2-C-methyl-D-erythritol 2,4-cyclic diphosphate + reduced [flavodoxin]. Its pathway is isoprenoid biosynthesis; isopentenyl diphosphate biosynthesis via DXP pathway; isopentenyl diphosphate from 1-deoxy-D-xylulose 5-phosphate: step 5/6. Functionally, converts 2C-methyl-D-erythritol 2,4-cyclodiphosphate (ME-2,4cPP) into 1-hydroxy-2-methyl-2-(E)-butenyl 4-diphosphate. The protein is 4-hydroxy-3-methylbut-2-en-1-yl diphosphate synthase (flavodoxin) of Mycobacterium bovis (strain BCG / Pasteur 1173P2).